Consider the following 119-residue polypeptide: Ribonuclease P protein component (119 aa).

It belongs to the RnpA family. As to quaternary structure, consists of a catalytic RNA component (M1 or rnpB) and a protein subunit.

The enzyme catalyses Endonucleolytic cleavage of RNA, removing 5'-extranucleotides from tRNA precursor.. In terms of biological role, RNaseP catalyzes the removal of the 5'-leader sequence from pre-tRNA to produce the mature 5'-terminus. It can also cleave other RNA substrates such as 4.5S RNA. The protein component plays an auxiliary but essential role in vivo by binding to the 5'-leader sequence and broadening the substrate specificity of the ribozyme. This Borreliella burgdorferi (strain ATCC 35210 / DSM 4680 / CIP 102532 / B31) (Borrelia burgdorferi) protein is Ribonuclease P protein component.